We begin with the raw amino-acid sequence, 434 residues long: Adenylosuccinate synthetase (434 aa).

Residues 22-28 (GDEGKGK) and 50-52 (GHT) each bind GTP. The active-site Proton acceptor is Asp-23. Mg(2+) is bound by residues Asp-23 and Gly-50. IMP is bound by residues 23–26 (DEGK), 48–51 (NAGH), Thr-139, Arg-153, Gln-234, Thr-249, and Arg-313. Catalysis depends on His-51, which acts as the Proton donor. 309–315 (ATTGRKR) contributes to the substrate binding site. GTP-binding positions include Arg-315, 341 to 343 (KLD), and 423 to 425 (SVG).

This sequence belongs to the adenylosuccinate synthetase family. Homodimer. Mg(2+) is required as a cofactor.

It is found in the cytoplasm. It catalyses the reaction IMP + L-aspartate + GTP = N(6)-(1,2-dicarboxyethyl)-AMP + GDP + phosphate + 2 H(+). The protein operates within purine metabolism; AMP biosynthesis via de novo pathway; AMP from IMP: step 1/2. Its function is as follows. Plays an important role in the de novo pathway of purine nucleotide biosynthesis. Catalyzes the first committed step in the biosynthesis of AMP from IMP. This chain is Adenylosuccinate synthetase, found in Chlorobium phaeobacteroides (strain DSM 266 / SMG 266 / 2430).